The primary structure comprises 89 residues: Small ribosomal subunit protein bS20 (89 aa).

The segment at 1–20 (MANHKSAEKRARQTIKRTER) is disordered.

The protein belongs to the bacterial ribosomal protein bS20 family.

Binds directly to 16S ribosomal RNA. In Campylobacter concisus (strain 13826), this protein is Small ribosomal subunit protein bS20.